The primary structure comprises 409 residues: Divalent metal cation transporter MntH (409 aa).

Helical transmembrane passes span 19–39 (LSLM…GNFA), 46–66 (ATFG…AMLV), 98–118 (WVQA…GAAI), 122–142 (LLFG…TFLI), 155–175 (LVIG…LIFS), 196–216 (AVFL…IYLH), 241–261 (IAMT…AAAF), 290–310 (VFGL…TLAG), 320–340 (FYIP…IVIL), 348–368 (ILVM…VPLL), and 388–408 (ILGK…LISL).

Belongs to the NRAMP family.

Its subcellular location is the cell inner membrane. In terms of biological role, h(+)-stimulated, divalent metal cation uptake system. In Yersinia pseudotuberculosis serotype O:1b (strain IP 31758), this protein is Divalent metal cation transporter MntH.